Here is a 329-residue protein sequence, read N- to C-terminus: DNA-directed RNA polymerase subunit alpha (329 aa).

The segment at 1–234 (MQGSVTEFLK…EQLDAFVELR (234 aa)) is alpha N-terminal domain (alpha-NTD). An alpha C-terminal domain (alpha-CTD) region spans residues 248–329 (FDPILLRPVD…WPPASLADDL (82 aa)).

The protein belongs to the RNA polymerase alpha chain family. In terms of assembly, homodimer. The RNAP catalytic core consists of 2 alpha, 1 beta, 1 beta' and 1 omega subunit. When a sigma factor is associated with the core the holoenzyme is formed, which can initiate transcription.

The catalysed reaction is RNA(n) + a ribonucleoside 5'-triphosphate = RNA(n+1) + diphosphate. In terms of biological role, DNA-dependent RNA polymerase catalyzes the transcription of DNA into RNA using the four ribonucleoside triphosphates as substrates. This Shewanella baltica (strain OS155 / ATCC BAA-1091) protein is DNA-directed RNA polymerase subunit alpha.